The sequence spans 1106 residues: Translation initiation factor IF-2 (1106 aa).

2 stretches are compositionally biased toward low complexity: residues 57 to 72 (GKAA…PDAG) and 81 to 97 (APST…SAPP). 2 disordered regions span residues 57 to 434 (GKAA…QKVH) and 466 to 497 (PSKP…RQRR). Pro residues-rich tracts occupy residues 113-123 (PAKPAPSAPPS) and 138-148 (PAKPAPSAPPS). Residues 172–199 (AKPVAKPASAPAPARPAQPLRPQASNRP) are compositionally biased toward low complexity. Composition is skewed to pro residues over residues 200–214 (PQQP…PAAK) and 223–235 (TAPP…PGAP). Low complexity-rich tracts occupy residues 251–292 (PNQQ…QQRR), 319–329 (PQGRQGGAPSR), and 395–405 (YRPAAAPGMAG). The span at 408–422 (RRPDWDDSARLDALR) shows a compositional bias: basic and acidic residues. Over residues 482–497 (ALRRRKKETTRQRQRR) the composition is skewed to basic residues. The region spanning 598–771 (RRPPVVTVMG…LLVTEVEDLK (174 aa)) is the tr-type G domain. The G1 stretch occupies residues 607-614 (GHVDHGKT). 607–614 (GHVDHGKT) provides a ligand contact to GTP. The segment at 632-636 (GITQH) is G2. The segment at 657–660 (DTPG) is G3. GTP-binding positions include 657–661 (DTPGH) and 711–714 (NKVD). Positions 711 to 714 (NKVD) are G4. A G5 region spans residues 747–749 (SAL).

This sequence belongs to the TRAFAC class translation factor GTPase superfamily. Classic translation factor GTPase family. IF-2 subfamily.

The protein localises to the cytoplasm. In terms of biological role, one of the essential components for the initiation of protein synthesis. Protects formylmethionyl-tRNA from spontaneous hydrolysis and promotes its binding to the 30S ribosomal subunits. Also involved in the hydrolysis of GTP during the formation of the 70S ribosomal complex. This Synechococcus sp. (strain RCC307) protein is Translation initiation factor IF-2.